The chain runs to 630 residues: Cytochrome B pre-mRNA-processing protein 2 (630 aa).

It is found in the mitochondrion. Its function is as follows. Appears to be specifically required for the splicing of the terminal intron (bI5) of the cytochrome b pre-mRNA. Can also stimulates the splicing of the omega intron of the precursor of large ribosomal RNA. The polypeptide is Cytochrome B pre-mRNA-processing protein 2 (CBP2) (Saccharomyces cerevisiae (strain ATCC 204508 / S288c) (Baker's yeast)).